A 246-amino-acid chain; its full sequence is E3 ubiquitin-protein ligase RNF182 (246 aa).

The RING-type zinc-finger motif lies at C22 to R70. Transmembrane regions (helical) follow at residues V184–L204 and L211–F231.

In terms of assembly, interacts with ATP6V0C.

The protein resides in the membrane. It is found in the cytoplasm. The catalysed reaction is S-ubiquitinyl-[E2 ubiquitin-conjugating enzyme]-L-cysteine + [acceptor protein]-L-lysine = [E2 ubiquitin-conjugating enzyme]-L-cysteine + N(6)-ubiquitinyl-[acceptor protein]-L-lysine.. Its pathway is protein modification; protein ubiquitination. In terms of biological role, E3 ubiquitin-protein ligase that mediates the ubiquitination of atp6v0c and targets it to degradation via the ubiquitin-proteasome pathway. The chain is E3 ubiquitin-protein ligase RNF182 (rnf182) from Xenopus laevis (African clawed frog).